A 546-amino-acid chain; its full sequence is 3-(3-hydroxy-phenyl)propionate/3-hydroxycinnamic acid hydroxylase 2 (546 aa).

FAD contacts are provided by residues 10 to 39 and 278 to 288; these read SVAI…VVER and FVAGRIALVGD.

It belongs to the PheA/TfdB FAD monooxygenase family. It depends on FAD as a cofactor.

The enzyme catalyses 3-(3-hydroxyphenyl)propanoate + NADH + O2 + H(+) = 3-(2,3-dihydroxyphenyl)propanoate + NAD(+) + H2O. The catalysed reaction is (2E)-3-(3-hydroxyphenyl)prop-2-enoate + NADH + O2 + H(+) = (2E)-3-(2,3-dihydroxyphenyl)prop-2-enoate + NAD(+) + H2O. It functions in the pathway aromatic compound metabolism; 3-phenylpropanoate degradation. In terms of biological role, catalyzes the insertion of one atom of molecular oxygen into position 2 of the phenyl ring of 3-(3-hydroxyphenyl)propionate (3-HPP) and hydroxycinnamic acid (3HCI). The sequence is that of 3-(3-hydroxy-phenyl)propionate/3-hydroxycinnamic acid hydroxylase 2 from Burkholderia vietnamiensis (strain G4 / LMG 22486) (Burkholderia cepacia (strain R1808)).